Reading from the N-terminus, the 125-residue chain is Large ribosomal subunit protein bL12 (125 aa).

This sequence belongs to the bacterial ribosomal protein bL12 family. Homodimer. Part of the ribosomal stalk of the 50S ribosomal subunit. Forms a multimeric L10(L12)X complex, where L10 forms an elongated spine to which 2 to 4 L12 dimers bind in a sequential fashion. Binds GTP-bound translation factors.

In terms of biological role, forms part of the ribosomal stalk which helps the ribosome interact with GTP-bound translation factors. Is thus essential for accurate translation. This Rickettsia typhi (strain ATCC VR-144 / Wilmington) protein is Large ribosomal subunit protein bL12.